A 187-amino-acid chain; its full sequence is Troponin I, slow skeletal muscle (187 aa).

Proline 2 bears the N-acetylproline mark. Positions 2 to 48 (PEVERKSKITASRKLMLKSLMLAKAKECWEQEHEEREAEKVRYLSER) are involved in binding TNC. Serine 58 carries the post-translational modification Phosphoserine. The involved in binding TNC and actin stretch occupies residues 97–118 (LKLKVLDLRGKFKRPPLRRVRV).

It belongs to the troponin I family. As to quaternary structure, binds to actin and tropomyosin.

Its function is as follows. Troponin I is the inhibitory subunit of troponin, the thin filament regulatory complex which confers calcium-sensitivity to striated muscle actomyosin ATPase activity. This Rattus norvegicus (Rat) protein is Troponin I, slow skeletal muscle (Tnni1).